We begin with the raw amino-acid sequence, 326 residues long: Putative ribose-phosphate pyrophosphokinase 2 (326 aa).

ATP contacts are provided by residues 43 to 45 and 102 to 103; these read DGE and RQ. Mg(2+) is bound at residue H136. Residues D225 and 229 to 233 each bind D-ribose 5-phosphate; that span reads NTGKT.

It belongs to the ribose-phosphate pyrophosphokinase family. Class I subfamily. As to quaternary structure, homohexamer. Mg(2+) is required as a cofactor.

It is found in the cytoplasm. It carries out the reaction D-ribose 5-phosphate + ATP = 5-phospho-alpha-D-ribose 1-diphosphate + AMP + H(+). It functions in the pathway metabolic intermediate biosynthesis; 5-phospho-alpha-D-ribose 1-diphosphate biosynthesis; 5-phospho-alpha-D-ribose 1-diphosphate from D-ribose 5-phosphate (route I): step 1/1. Involved in the biosynthesis of the central metabolite phospho-alpha-D-ribosyl-1-pyrophosphate (PRPP) via the transfer of pyrophosphoryl group from ATP to 1-hydroxyl of ribose-5-phosphate (Rib-5-P). The chain is Putative ribose-phosphate pyrophosphokinase 2 from Streptococcus pyogenes serotype M3 (strain SSI-1).